The following is a 1162-amino-acid chain: Carbamoyl phosphate synthase large chain (1162 aa).

The carboxyphosphate synthetic domain stretch occupies residues 1-456 (MPKRTDIKSI…SLQKALRGLE (456 aa)). The ATP site is built by R129, R222, G228, G229, E261, V263, E268, G294, V295, H296, Q338, and E352. One can recognise an ATP-grasp 1 domain in the interval 186 to 381 (ETEWQLGEVE…IAKVAAKLAV (196 aa)). Positions 338, 352, and 354 each coordinate Mg(2+). The Mn(2+) site is built by Q338, E352, and N354. An oligomerization domain region spans residues 457–613 (TGLTGFDEIA…PFVGQPRSEA (157 aa)). Positions 614–1025 (EVSDRKKVVI…AFAKAQLGAG (412 aa)) are carbamoyl phosphate synthetic domain. The region spanning 742 to 954 (QKLLIKLDLN…IAKVAARIMA (213 aa)) is the ATP-grasp 2 domain. ATP-binding residues include R778, T838, L840, E845, G870, I871, H872, S873, Q913, and E925. Mg(2+) is bound by residues Q913, E925, and N927. 3 residues coordinate Mn(2+): Q913, E925, and N927. Residues 1026–1162 (VELPREGTVF…VRPLQDYFRS (137 aa)) enclose the MGS-like domain. Residues 1026–1162 (VELPREGTVF…VRPLQDYFRS (137 aa)) form an allosteric domain region.

This sequence belongs to the CarB family. Composed of two chains; the small (or glutamine) chain promotes the hydrolysis of glutamine to ammonia, which is used by the large (or ammonia) chain to synthesize carbamoyl phosphate. Tetramer of heterodimers (alpha,beta)4. Mg(2+) serves as cofactor. Requires Mn(2+) as cofactor.

The enzyme catalyses hydrogencarbonate + L-glutamine + 2 ATP + H2O = carbamoyl phosphate + L-glutamate + 2 ADP + phosphate + 2 H(+). It carries out the reaction hydrogencarbonate + NH4(+) + 2 ATP = carbamoyl phosphate + 2 ADP + phosphate + 2 H(+). Its pathway is amino-acid biosynthesis; L-arginine biosynthesis; carbamoyl phosphate from bicarbonate: step 1/1. It functions in the pathway pyrimidine metabolism; UMP biosynthesis via de novo pathway; (S)-dihydroorotate from bicarbonate: step 1/3. Functionally, large subunit of the glutamine-dependent carbamoyl phosphate synthetase (CPSase). CPSase catalyzes the formation of carbamoyl phosphate from the ammonia moiety of glutamine, carbonate, and phosphate donated by ATP, constituting the first step of 2 biosynthetic pathways, one leading to arginine and/or urea and the other to pyrimidine nucleotides. The large subunit (synthetase) binds the substrates ammonia (free or transferred from glutamine from the small subunit), hydrogencarbonate and ATP and carries out an ATP-coupled ligase reaction, activating hydrogencarbonate by forming carboxy phosphate which reacts with ammonia to form carbamoyl phosphate. The protein is Carbamoyl phosphate synthase large chain of Brucella melitensis biotype 1 (strain ATCC 23456 / CCUG 17765 / NCTC 10094 / 16M).